The sequence spans 181 residues: Ribosome maturation factor RimM (181 aa).

The region spanning 100–177 (EEGFYWMQLI…QIQVDWQLED (78 aa)) is the PRC barrel domain.

This sequence belongs to the RimM family. Binds ribosomal protein uS19.

The protein localises to the cytoplasm. Its function is as follows. An accessory protein needed during the final step in the assembly of 30S ribosomal subunit, possibly for assembly of the head region. Essential for efficient processing of 16S rRNA. May be needed both before and after RbfA during the maturation of 16S rRNA. It has affinity for free ribosomal 30S subunits but not for 70S ribosomes. The sequence is that of Ribosome maturation factor RimM from Hydrogenovibrio crunogenus (strain DSM 25203 / XCL-2) (Thiomicrospira crunogena).